The sequence spans 271 residues: uncharacterized protein (271 aa).

This sequence belongs to the HAD-like hydrolase superfamily.

This is an uncharacterized protein from Staphylococcus aureus (strain NCTC 8325 / PS 47).